The primary structure comprises 303 residues: Glycine--tRNA ligase alpha subunit (303 aa).

Belongs to the class-II aminoacyl-tRNA synthetase family. Tetramer of two alpha and two beta subunits.

The protein resides in the cytoplasm. It carries out the reaction tRNA(Gly) + glycine + ATP = glycyl-tRNA(Gly) + AMP + diphosphate. This is Glycine--tRNA ligase alpha subunit from Stenotrophomonas maltophilia (strain K279a).